A 396-amino-acid polypeptide reads, in one-letter code: Elongation factor Tu (396 aa).

One can recognise a tr-type G domain in the interval 10–205 (KPHVNIGTIG…AVDESIPDPV (196 aa)). The segment at 19 to 26 (GHVDHGKT) is G1. Position 19–26 (19–26 (GHVDHGKT)) interacts with GTP. A Mg(2+)-binding site is contributed by Thr-26. Residues 62–66 (GITIN) form a G2 region. The G3 stretch occupies residues 83-86 (DAPG). GTP is bound by residues 83–87 (DAPGH) and 138–141 (NKSD). The G4 stretch occupies residues 138-141 (NKSD). The interval 175-177 (SAL) is G5.

The protein belongs to the TRAFAC class translation factor GTPase superfamily. Classic translation factor GTPase family. EF-Tu/EF-1A subfamily. In terms of assembly, monomer.

The protein resides in the cytoplasm. The enzyme catalyses GTP + H2O = GDP + phosphate + H(+). Functionally, GTP hydrolase that promotes the GTP-dependent binding of aminoacyl-tRNA to the A-site of ribosomes during protein biosynthesis. The polypeptide is Elongation factor Tu (Mycobacterium marinum (strain ATCC BAA-535 / M)).